The chain runs to 183 residues: Peptide methionine sulfoxide reductase MsrA 1 (183 aa).

The active site involves Cys-12.

It belongs to the MsrA Met sulfoxide reductase family.

The catalysed reaction is L-methionyl-[protein] + [thioredoxin]-disulfide + H2O = L-methionyl-(S)-S-oxide-[protein] + [thioredoxin]-dithiol. It catalyses the reaction [thioredoxin]-disulfide + L-methionine + H2O = L-methionine (S)-S-oxide + [thioredoxin]-dithiol. In terms of biological role, has an important function as a repair enzyme for proteins that have been inactivated by oxidation. Catalyzes the reversible oxidation-reduction of methionine sulfoxide in proteins to methionine. The protein is Peptide methionine sulfoxide reductase MsrA 1 (msrA1) of Lactococcus lactis subsp. lactis (strain IL1403) (Streptococcus lactis).